Consider the following 419-residue polypeptide: Gamma-glutamyl phosphate reductase (419 aa).

The protein belongs to the gamma-glutamyl phosphate reductase family.

It is found in the cytoplasm. It catalyses the reaction L-glutamate 5-semialdehyde + phosphate + NADP(+) = L-glutamyl 5-phosphate + NADPH + H(+). The protein operates within amino-acid biosynthesis; L-proline biosynthesis; L-glutamate 5-semialdehyde from L-glutamate: step 2/2. Functionally, catalyzes the NADPH-dependent reduction of L-glutamate 5-phosphate into L-glutamate 5-semialdehyde and phosphate. The product spontaneously undergoes cyclization to form 1-pyrroline-5-carboxylate. The sequence is that of Gamma-glutamyl phosphate reductase from Maridesulfovibrio salexigens (strain ATCC 14822 / DSM 2638 / NCIMB 8403 / VKM B-1763) (Desulfovibrio salexigens).